The chain runs to 473 residues: Phosphatidylserine synthase 2 (473 aa).

The segment at 1 to 25 is disordered; sequence MRRGERRVAGGSGSESPLLKGRRST. The Cytoplasmic segment spans residues 1–40; that stretch reads MRRGERRVAGGSGSESPLLKGRRSTESEVYDDGTNTFFWR. 3 positions are modified to phosphoserine: S12, S14, and S16. A helical transmembrane segment spans residues 41–61; the sequence is AHTLTVLFILTCALGYVTLLE. The Lumenal portion of the chain corresponds to 62 to 74; the sequence is ETPQDTAYNTKRG. Residues 75-95 traverse the membrane as a helical segment; that stretch reads IVASILVFLCFGVTQAKDGPF. Topologically, residues 96–104 are cytoplasmic; the sequence is SRPHPAYWR. The helical transmembrane segment at 105–125 threads the bilayer; the sequence is FWLCVSVVYELFLIFILFQTV. Over 126–291 the chain is Lumenal; sequence QDGRQFLKYV…EWKPASSLHR (166 aa). An N-linked (GlcNAc...) asparagine glycan is attached at N159. The chain crosses the membrane as a helical span at residues 292–312; it reads WLAVCGIILVFLLAELNTFYL. Position 313 (K313) is a topological domain, cytoplasmic. Residues 314–334 traverse the membrane as a helical segment; that stretch reads FVLWMPPEHYLVLLRLVFFVN. Over 335 to 354 the chain is Lumenal; it reads VGGVAMREIYDFMDELKPHR. A helical transmembrane segment spans residues 355 to 375; that stretch reads KLGQQAWLVAAITVTELLIVV. At 376 to 381 the chain is on the cytoplasmic side; the sequence is KYDPHT. The helical transmembrane segment at 382-402 threads the bilayer; it reads LTLSLPFYISQCWTLGSILVL. Over 403–473 the chain is Lumenal; the sequence is TWTVWRFFLR…TAEEGTSAAS (71 aa). The disordered stretch occupies residues 422–473; it reads RRQKQQSHQARAVNNRDGHPGPDDDLLGTGTAEEEGTTNDGVTAEEGTSAAS.

The protein belongs to the phosphatidyl serine synthase family. Highly expressed in testis. Detected at lower levels in kidney and heart.

It is found in the endoplasmic reticulum membrane. It localises to the membrane. The catalysed reaction is a 1,2-diacyl-sn-glycero-3-phosphoethanolamine + L-serine = a 1,2-diacyl-sn-glycero-3-phospho-L-serine + ethanolamine. It carries out the reaction 1-hexadecanoyl-2-(9Z-octadecenoyl)-sn-glycero-3-phosphoethanolamine + L-serine = 1-hexadecanoyl-2-(9Z-octadecenoyl)-sn-glycero-3-phospho-L-serine + ethanolamine. It catalyses the reaction 1-hexadecanoyl-2-(4Z,7Z,10Z,13Z,16Z,19Z-docosahexaenoyl)-sn-glycero-3-phosphoethanolamine + L-serine = 1-hexadecanoyl-2-(4Z,7Z,10Z,13Z,16Z,19Z-docosahexaenoyl)-sn-glycero-3-phosphoserine + ethanolamine. The enzyme catalyses 1-octadecanoyl-2-(5Z,8Z,11Z,14Z)-eicosatetraenoyl-sn-glycero-3-phosphoethanolamine + L-serine = 1-octadecanoyl-2-(5Z,8Z,11Z,14Z)-eicosatetraenoyl-sn-glycero-3-phosphoserine + ethanolamine. The catalysed reaction is 1-octadecanoyl-2-(4Z,7Z,10Z,13Z,16Z,19Z-docosahexaenoyl)-sn-glycero-3-phosphoethanolamine + L-serine = 1-octadecanoyl-2-(4Z,7Z,10Z,13Z,16Z,19Z-docosahexaenoyl)-sn-glycero-3-phosphoserine + ethanolamine. It carries out the reaction 1-(1Z-octadecenyl)-2-(4Z,7Z,10Z,13Z,16Z,19Z-docosahexaenoyl)-sn-glycero-3-phosphoethanolamine + L-serine = 1-(1Z-octadecenyl)-2-(4Z,7Z,10Z,13Z,16Z,19Z-docosahexaenoyl)-sn-glycero-3-phospho-L-serine + ethanolamine. It catalyses the reaction 1-octadecanoyl-2-(9Z-octadecenoyl)-sn-glycero-3-phosphoethanolamine + L-serine = 1-octadecanoyl-2-(9Z-octadecenoyl)-sn-glycero-3-phospho-L-serine + ethanolamine. The enzyme catalyses 1-(1Z-octadecenyl)-2-(9Z-octadecenoyl)-sn-glycero-3-phosphoethanolamine + L-serine = 1-(1Z-octadecenyl)-2-(9Z-octadecenoyl)-sn-glycero-3-phospho-L-serine + ethanolamine. The catalysed reaction is 1-(1Z-octadecenyl)-2-(5Z,8Z,11Z,14Z- eicosatetraenoyl)-sn-glycero-3-phosphoethanolamine + L-serine = 1-(1Z-octadecenyl)-2-(5Z,8Z,11Z,14Z-eicosatetraenoyl)-sn-glycero-3-phospho-L-serine + ethanolamine. The protein operates within phospholipid metabolism; phosphatidylserine biosynthesis. Almost complete inhibition by ethanolamine in both the mitochondria-associated membrane (MAM) and endoplasmic reticulum (ER) per se. Functionally, catalyzes a base-exchange reaction in which the polar head group of phosphatidylethanolamine (PE) or phosphatidylcholine (PC) is replaced by L-serine. Catalyzes the conversion of phosphatatidylethanolamine and does not act on phosphatidylcholine. Can utilize both phosphatidylethanolamine (PE) plasmalogen and diacyl PE as substrate and the latter is six times better utilized, indicating the importance of an ester linkage at the sn-1 position. Although it shows no sn-1 fatty acyl preference, exhibits significant preference towards docosahexaenoic acid (22:6n-3) compared with 18:1 or 20:4 at the sn-2 position. This chain is Phosphatidylserine synthase 2 (Ptdss2), found in Mus musculus (Mouse).